The sequence spans 310 residues: ADP-L-glycero-D-manno-heptose-6-epimerase (310 aa).

NADP(+)-binding positions include 10 to 11 (FI), 31 to 32 (DN), Lys-38, Lys-53, 75 to 79 (EGACS), and Asn-92. Residue Tyr-140 is the Proton acceptor of the active site. Residue Lys-144 participates in NADP(+) binding. Substrate is bound at residue Asn-169. Positions 170 and 178 each coordinate NADP(+). Lys-178 (proton acceptor) is an active-site residue. Residues Ser-180, His-187, 201–204 (FEGS), Arg-209, and Tyr-272 contribute to the substrate site.

It belongs to the NAD(P)-dependent epimerase/dehydratase family. HldD subfamily. Homopentamer. NADP(+) is required as a cofactor.

The enzyme catalyses ADP-D-glycero-beta-D-manno-heptose = ADP-L-glycero-beta-D-manno-heptose. Its pathway is nucleotide-sugar biosynthesis; ADP-L-glycero-beta-D-manno-heptose biosynthesis; ADP-L-glycero-beta-D-manno-heptose from D-glycero-beta-D-manno-heptose 7-phosphate: step 4/4. Functionally, catalyzes the interconversion between ADP-D-glycero-beta-D-manno-heptose and ADP-L-glycero-beta-D-manno-heptose via an epimerization at carbon 6 of the heptose. In Cronobacter sakazakii (strain ATCC BAA-894) (Enterobacter sakazakii), this protein is ADP-L-glycero-D-manno-heptose-6-epimerase.